Consider the following 968-residue polypeptide: Translation initiation factor IF-2 (968 aa).

Low complexity predominate over residues 305–319 (KPAAAAGAPGAPGAA). The segment at 305-376 (KPAAAAGAPG…NDRDARPEST (72 aa)) is disordered. The 168-residue stretch at 468–635 (PRAPVVTVMG…QVLLQAEVLE (168 aa)) folds into the tr-type G domain. The G1 stretch occupies residues 477 to 484 (GHVDHGKT). GTP is bound at residue 477-484 (GHVDHGKT). Residues 502-506 (GITQH) are G2. Positions 523 to 526 (DTPG) are G3. GTP-binding positions include 523–527 (DTPGH) and 577–580 (NKID). The interval 577 to 580 (NKID) is G4. The G5 stretch occupies residues 613-615 (SAR).

The protein belongs to the TRAFAC class translation factor GTPase superfamily. Classic translation factor GTPase family. IF-2 subfamily.

It is found in the cytoplasm. In terms of biological role, one of the essential components for the initiation of protein synthesis. Protects formylmethionyl-tRNA from spontaneous hydrolysis and promotes its binding to the 30S ribosomal subunits. Also involved in the hydrolysis of GTP during the formation of the 70S ribosomal complex. The chain is Translation initiation factor IF-2 from Polaromonas sp. (strain JS666 / ATCC BAA-500).